We begin with the raw amino-acid sequence, 182 residues long: ATP-dependent protease subunit HslV (182 aa).

Residue Thr-7 is part of the active site. Na(+) contacts are provided by Gly-162, Cys-165, and Thr-168.

The protein belongs to the peptidase T1B family. HslV subfamily. A double ring-shaped homohexamer of HslV is capped on each side by a ring-shaped HslU homohexamer. The assembly of the HslU/HslV complex is dependent on binding of ATP.

The protein resides in the cytoplasm. The catalysed reaction is ATP-dependent cleavage of peptide bonds with broad specificity.. Its activity is regulated as follows. Allosterically activated by HslU binding. Its function is as follows. Protease subunit of a proteasome-like degradation complex believed to be a general protein degrading machinery. The polypeptide is ATP-dependent protease subunit HslV (Legionella pneumophila (strain Lens)).